The primary structure comprises 268 residues: Leucyl/phenylalanyl-tRNA--protein transferase (268 aa).

This sequence belongs to the L/F-transferase family.

It is found in the cytoplasm. It catalyses the reaction N-terminal L-lysyl-[protein] + L-leucyl-tRNA(Leu) = N-terminal L-leucyl-L-lysyl-[protein] + tRNA(Leu) + H(+). The catalysed reaction is N-terminal L-arginyl-[protein] + L-leucyl-tRNA(Leu) = N-terminal L-leucyl-L-arginyl-[protein] + tRNA(Leu) + H(+). It carries out the reaction L-phenylalanyl-tRNA(Phe) + an N-terminal L-alpha-aminoacyl-[protein] = an N-terminal L-phenylalanyl-L-alpha-aminoacyl-[protein] + tRNA(Phe). Functions in the N-end rule pathway of protein degradation where it conjugates Leu, Phe and, less efficiently, Met from aminoacyl-tRNAs to the N-termini of proteins containing an N-terminal arginine or lysine. The chain is Leucyl/phenylalanyl-tRNA--protein transferase from Psychrobacter arcticus (strain DSM 17307 / VKM B-2377 / 273-4).